Reading from the N-terminus, the 458-residue chain is Argininosuccinate lyase (458 aa).

It belongs to the lyase 1 family. Argininosuccinate lyase subfamily.

The protein localises to the cytoplasm. The enzyme catalyses 2-(N(omega)-L-arginino)succinate = fumarate + L-arginine. The protein operates within amino-acid biosynthesis; L-arginine biosynthesis; L-arginine from L-ornithine and carbamoyl phosphate: step 3/3. This is Argininosuccinate lyase from Hydrogenobaculum sp. (strain Y04AAS1).